A 324-amino-acid chain; its full sequence is Biotin synthase 1 (324 aa).

One can recognise a Radical SAM core domain in the interval 37-256 (NAIETASLLS…VALARILMPA (220 aa)). Residues Cys52, Cys56, and Cys59 each coordinate [4Fe-4S] cluster. Cys96, Cys127, Cys187, and Arg260 together coordinate [2Fe-2S] cluster.

This sequence belongs to the radical SAM superfamily. Biotin synthase family. In terms of assembly, homodimer. [4Fe-4S] cluster serves as cofactor. [2Fe-2S] cluster is required as a cofactor.

It catalyses the reaction (4R,5S)-dethiobiotin + (sulfur carrier)-SH + 2 reduced [2Fe-2S]-[ferredoxin] + 2 S-adenosyl-L-methionine = (sulfur carrier)-H + biotin + 2 5'-deoxyadenosine + 2 L-methionine + 2 oxidized [2Fe-2S]-[ferredoxin]. It functions in the pathway cofactor biosynthesis; biotin biosynthesis; biotin from 7,8-diaminononanoate: step 2/2. In terms of biological role, catalyzes the conversion of dethiobiotin (DTB) to biotin by the insertion of a sulfur atom into dethiobiotin via a radical-based mechanism. The polypeptide is Biotin synthase 1 (Paracoccus denitrificans (strain Pd 1222)).